The chain runs to 1217 residues: Splicing factor 3B subunit 3 (1217 aa).

Interaction with PHF5A, SF3B1 and SF3B5 regions lie at residues 105-119 and 145-168; these read ETFG…VPGQ and NRDA…TLVY. Phosphoserine is present on Ser156. Interaction with SF3B1 and SF3B5 regions lie at residues 193 to 231 and 786 to 804; these read DNDP…LEEH and RKFV…ETDH. The interval 1028–1049 is interaction with SF3B1; that stretch reads TYPRWVTTASLLDYDTVAGADK. The segment at 1100 to 1123 is interaction with SF3B5; it reads TVLSLQKTTLIPGGSESLVYTTLS. Thr1200 bears the Phosphothreonine mark.

Belongs to the RSE1 family. Component of the 17S U2 SnRNP complex, a ribonucleoprotein complex that contains small nuclear RNA (snRNA) U2 and a number of specific proteins. Part of the SF3B subcomplex of the 17S U2 SnRNP complex. SF3B associates with the splicing subcomplex SF3A and a 12S RNA unit to form the U2 small nuclear ribonucleoproteins complex (U2 snRNP). Within the SF3B subcomplex, interacts directly with SF3B1 (via HEAT domain), SF3B5 and PHF5A. Identified in the spliceosome A complex; remains associated with the spliceosome throughout the splicing process. Component of the spliceosome B complex. Identified in the spliceosome C complex. Identified in the spliceosome E complex. Component of the minor (U12-type spliceosome) spliceosome. Within this complex, interacts with SCNM1. Associates with the STAGA transcription coactivator-HAT complex. Interacts with SUPT3H. Interacts with TAF3.

The protein localises to the nucleus. Functionally, component of the 17S U2 SnRNP complex of the spliceosome, a large ribonucleoprotein complex that removes introns from transcribed pre-mRNAs. The 17S U2 SnRNP complex (1) directly participates in early spliceosome assembly and (2) mediates recognition of the intron branch site during pre-mRNA splicing by promoting the selection of the pre-mRNA branch-site adenosine, the nucleophile for the first step of splicing. Within the 17S U2 SnRNP complex, SF3B3 is part of the SF3B subcomplex, which is required for 'A' complex assembly formed by the stable binding of U2 snRNP to the branchpoint sequence in pre-mRNA. Sequence independent binding of SF3A and SF3B subcomplexes upstream of the branch site is essential, it may anchor U2 snRNP to the pre-mRNA. May also be involved in the assembly of the 'E' complex. Also acts as a component of the minor spliceosome, which is involved in the splicing of U12-type introns in pre-mRNAs. The polypeptide is Splicing factor 3B subunit 3 (SF3B3) (Pongo abelii (Sumatran orangutan)).